Here is a 313-residue protein sequence, read N- to C-terminus: Ribosomal RNA small subunit methyltransferase H (313 aa).

Residues 35–37 (GGH), D55, F79, D101, and Q108 contribute to the S-adenosyl-L-methionine site.

Belongs to the methyltransferase superfamily. RsmH family.

Its subcellular location is the cytoplasm. It catalyses the reaction cytidine(1402) in 16S rRNA + S-adenosyl-L-methionine = N(4)-methylcytidine(1402) in 16S rRNA + S-adenosyl-L-homocysteine + H(+). In terms of biological role, specifically methylates the N4 position of cytidine in position 1402 (C1402) of 16S rRNA. The chain is Ribosomal RNA small subunit methyltransferase H from Escherichia coli O7:K1 (strain IAI39 / ExPEC).